We begin with the raw amino-acid sequence, 355 residues long: Cobalt-precorrin-5B C(1)-methyltransferase (355 aa).

It belongs to the CbiD family.

It catalyses the reaction Co-precorrin-5B + S-adenosyl-L-methionine = Co-precorrin-6A + S-adenosyl-L-homocysteine. The protein operates within cofactor biosynthesis; adenosylcobalamin biosynthesis; cob(II)yrinate a,c-diamide from sirohydrochlorin (anaerobic route): step 6/10. Functionally, catalyzes the methylation of C-1 in cobalt-precorrin-5B to form cobalt-precorrin-6A. In Sulfolobus acidocaldarius (strain ATCC 33909 / DSM 639 / JCM 8929 / NBRC 15157 / NCIMB 11770), this protein is Cobalt-precorrin-5B C(1)-methyltransferase.